The chain runs to 576 residues: Low-affinity glucose transporter HXT4 (576 aa).

The segment at 1 to 56 (MSEEAAYQEDTAVQNTPADALSPVESDSNSALSTPSNKAERDDMKDFDENHEESNN) is disordered. Topologically, residues 1-66 (MSEEAAYQED…YVEIPKKPAS (66 aa)) are cytoplasmic. Polar residues predominate over residues 25–37 (ESDSNSALSTPSN). Positions 38-54 (KAERDDMKDFDENHEES) are enriched in basic and acidic residues. K45 is covalently cross-linked (Glycyl lysine isopeptide (Lys-Gly) (interchain with G-Cter in ubiquitin)). A helical transmembrane segment spans residues 67 to 87 (AYVTVSICCLMVAFGGFVFGW). At 88-122 (DTGTISGFVAQTDFIRRFGMKHHDGTYYLSKVRTG) the chain is on the extracellular side. The chain crosses the membrane as a helical span at residues 123 to 143 (LIVSIFNIGCAIGGIILARLG). Residues 144-149 (DMYGRK) are Cytoplasmic-facing. Residues 150–170 (MGLIVVVVIYIIGIIIQIASI) form a helical membrane-spanning segment. At 171 to 180 (NKWYQYFIGR) the chain is on the extracellular side. Residues 181–201 (IISGLGVGGIAVLSPMLISEV) traverse the membrane as a helical segment. Over 202–207 (SPKHIR) the chain is Cytoplasmic. Residues 208 to 228 (GTLVSCYQLMITLGIFLGYCT) traverse the membrane as a helical segment. At 229–242 (NYGTKTYTNSVQWR) the chain is on the extracellular side. A helical membrane pass occupies residues 243–263 (VPLGLGFAWALFMIGGMTFVP). At 264–346 (ESPRYLVEVG…IQSLQQLTGD (83 aa)) the chain is on the cytoplasmic side. A helical membrane pass occupies residues 347–363 (NYFFYYGTTVFTAVGLE). Residues 364–369 (DSFETS) are Extracellular-facing. The chain crosses the membrane as a helical span at residues 370 to 387 (IVLGIVNFASTFVGIFLV). The Cytoplasmic segment spans residues 388–394 (ERYGRRR). A helical membrane pass occupies residues 395–415 (CLLWGAASMTACMVVFASVGV). Topologically, residues 416–437 (TRLWPNGKKNGSSKGAGNCMIV) are extracellular. An N-linked (GlcNAc...) asparagine glycan is attached at N425. A helical transmembrane segment spans residues 438–458 (FTCFYLFCFATTWAPIPFVVN). The Cytoplasmic segment spans residues 459–475 (SETFPLRVKSKCMAIAQ). The chain crosses the membrane as a helical span at residues 476 to 496 (ACNWIWGFLIGFFTPFISGAI). Residue D497 is a topological domain, extracellular. The chain crosses the membrane as a helical span at residues 498 to 518 (FYYGYVFMGCLVFSYFYVFFF). Topologically, residues 519–576 (VPETKGLTLEEVNTLWEEGVLPWKSPSWVPPNKRGTDYNADDLMHDDQPFYKKMFGKK) are cytoplasmic.

It belongs to the major facilitator superfamily. Sugar transporter (TC 2.A.1.1) family.

Its subcellular location is the cell membrane. Xylose uptake is strongly inhibited by glucose. In terms of biological role, low-affinity glucose transporter. Can also transport xylose. This Saccharomyces cerevisiae (strain YJM789) (Baker's yeast) protein is Low-affinity glucose transporter HXT4 (HXT4).